The chain runs to 139 residues: MEAVVFVFSLLDCCALIFLSVYFIITLSDLECDYINARSCCSKLNKWVIPELVGHTLVTVLMLISLHWFIFLLNLPVAAWNIYRYIMVPSGNMGVFDPTEIHNRGQLKSHMKEAMIKLGFHLLCFFMYLYSMILALIND.

The next 3 membrane-spanning stretches (helical) occupy residues 5–25 (VFVFSLLDCCALIFLSVYFII), 57–77 (LVTVLMLISLHWFIFLLNLPV), and 118–138 (LGFHLLCFFMYLYSMILALIN).

This sequence belongs to the cornichon family. In terms of assembly, interacts with Sec23/24 complex components SEC24B and SEC24D. Interacts with CCR5. Interacts with ADRB2 in the early secretory pathway.

Its subcellular location is the membrane. The protein resides in the endoplasmic reticulum. It localises to the endoplasmic reticulum-Golgi intermediate compartment. Its function is as follows. Involved in G protein-coupled receptors (GPCRs) trafficking from the endoplasmic reticulum to the cell surface; it promotes the exit of GPCRs from the early secretory pathway, likely through interaction with the COPII machinery. The chain is Protein cornichon homolog 4 (CNIH4) from Bos taurus (Bovine).